The following is a 268-amino-acid chain: Cytolethal distending toxin subunit A (268 aa).

A signal peptide spans 1 to 19; sequence MQKIIVFILCCFMTFFLYA. Cysteine 20 is lipidated: N-palmitoyl cysteine. The S-diacylglycerol cysteine moiety is linked to residue cysteine 20. A Ricin B-type lectin domain is found at 112-252; sequence VSDFLTILGP…DNFDQQWFLT (141 aa). The segment at 129–140 is mediates binding to target cells; it reads WALAQGNWIWGY.

Heterotrimer of 3 subunits, CdtA, CdtB and CdtC.

It localises to the cell outer membrane. Its function is as follows. CDTs are cytotoxins which induce cell distension, growth arrest in G2/M phase, nucleus swelling, and chromatin fragmentation in HeLa cells. The sequence is that of Cytolethal distending toxin subunit A (cdtA) from Campylobacter jejuni subsp. jejuni serotype O:2 (strain ATCC 700819 / NCTC 11168).